A 637-amino-acid polypeptide reads, in one-letter code: Limonene synthase, chloroplastic (637 aa).

The transit peptide at 1 to 56 (MALLSIVSLQVPKSCGLKSLISSSNVQKALCISTAVPTLRMRRRQKALVINMKLTT) directs the protein to the chloroplast. Positions 388, 392, and 540 each coordinate Mg(2+). The DDXXD motif motif lies at 388–392 (DDIYD).

This sequence belongs to the terpene synthase family. Tpsd subfamily. Requires Mg(2+) as cofactor. The cofactor is Mn(2+). K(+) is required as a cofactor.

It localises to the plastid. The protein localises to the chloroplast. It catalyses the reaction (2E)-geranyl diphosphate = (4S)-limonene + diphosphate. It participates in terpene metabolism; oleoresin biosynthesis. Functionally, involved in defensive oleoresin formation in conifers in response to insect attack or other injury. Involved in monoterpene (C10) olefins biosynthesis. In Abies grandis (Grand fir), this protein is Limonene synthase, chloroplastic (ag10).